The primary structure comprises 65 residues: Small ribosomal subunit protein eS17 (65 aa).

It belongs to the eukaryotic ribosomal protein eS17 family.

This Methanobrevibacter smithii (strain ATCC 35061 / DSM 861 / OCM 144 / PS) protein is Small ribosomal subunit protein eS17.